The sequence spans 331 residues: tRNA-modifying protein YgfZ (331 aa).

Folate-binding residues include Trp28 and Trp191.

The protein belongs to the tRNA-modifying YgfZ family.

The protein localises to the cytoplasm. In terms of biological role, folate-binding protein involved in regulating the level of ATP-DnaA and in the modification of some tRNAs. It is probably a key factor in regulatory networks that act via tRNA modification, such as initiation of chromosomal replication. The sequence is that of tRNA-modifying protein YgfZ from Edwardsiella ictaluri (strain 93-146).